The chain runs to 382 residues: Lipid-A-disaccharide synthase (382 aa).

It belongs to the LpxB family.

It carries out the reaction 2-N,3-O-bis[(3R)-3-hydroxytetradecanoyl]-alpha-D-glucosaminyl 1-phosphate + UDP-2-N,3-O-bis[(3R)-3-hydroxytetradecanoyl]-alpha-D-glucosamine = lipid A disaccharide (E. coli) + UDP + H(+). The enzyme catalyses a lipid X + a UDP-2-N,3-O-bis[(3R)-3-hydroxyacyl]-alpha-D-glucosamine = a lipid A disaccharide + UDP + H(+). Its pathway is glycolipid biosynthesis; lipid IV(A) biosynthesis; lipid IV(A) from (3R)-3-hydroxytetradecanoyl-[acyl-carrier-protein] and UDP-N-acetyl-alpha-D-glucosamine: step 5/6. Condensation of UDP-2,3-diacylglucosamine and 2,3-diacylglucosamine-1-phosphate to form lipid A disaccharide, a precursor of lipid A, a phosphorylated glycolipid that anchors the lipopolysaccharide to the outer membrane of the cell. This is Lipid-A-disaccharide synthase from Escherichia fergusonii (strain ATCC 35469 / DSM 13698 / CCUG 18766 / IAM 14443 / JCM 21226 / LMG 7866 / NBRC 102419 / NCTC 12128 / CDC 0568-73).